The following is a 141-amino-acid chain: ATP synthase epsilon chain (141 aa).

It belongs to the ATPase epsilon chain family. F-type ATPases have 2 components, CF(1) - the catalytic core - and CF(0) - the membrane proton channel. CF(1) has five subunits: alpha(3), beta(3), gamma(1), delta(1), epsilon(1). CF(0) has three main subunits: a, b and c.

Its subcellular location is the cell inner membrane. Functionally, produces ATP from ADP in the presence of a proton gradient across the membrane. This is ATP synthase epsilon chain from Dechloromonas aromatica (strain RCB).